The following is a 117-amino-acid chain: Immunoglobulin kappa variable 1-9 (117 aa).

The first 22 residues, 1–22, serve as a signal peptide directing secretion; sequence MDMRVPAQLLGLLLLWLPGARC. Residues 23-45 form a framework-1 region; the sequence is DIQLTQSPSFLSASVGDRVTITC. The 94-residue stretch at 24-117 folds into the Ig-like domain; sequence IQLTQSPSFL…YYCQQLNSYP (94 aa). A disulfide bridge links C45 with C110. The segment at 46-56 is complementarity-determining-1; the sequence is RASQGISSYLA. The tract at residues 57 to 71 is framework-2; the sequence is WYQQKPGKAPKLLIY. The complementarity-determining-2 stretch occupies residues 72 to 78; the sequence is AASTLQS. Residues 79-110 are framework-3; it reads GVPSRFSGSGSGTEFTLTISSLQPEDFATYYC. The interval 111–117 is complementarity-determining-3; sequence QQLNSYP.

As to quaternary structure, immunoglobulins are composed of two identical heavy chains and two identical light chains; disulfide-linked.

Its subcellular location is the secreted. It is found in the cell membrane. Its function is as follows. V region of the variable domain of immunoglobulin light chains that participates in the antigen recognition. Immunoglobulins, also known as antibodies, are membrane-bound or secreted glycoproteins produced by B lymphocytes. In the recognition phase of humoral immunity, the membrane-bound immunoglobulins serve as receptors which, upon binding of a specific antigen, trigger the clonal expansion and differentiation of B lymphocytes into immunoglobulins-secreting plasma cells. Secreted immunoglobulins mediate the effector phase of humoral immunity, which results in the elimination of bound antigens. The antigen binding site is formed by the variable domain of one heavy chain, together with that of its associated light chain. Thus, each immunoglobulin has two antigen binding sites with remarkable affinity for a particular antigen. The variable domains are assembled by a process called V-(D)-J rearrangement and can then be subjected to somatic hypermutations which, after exposure to antigen and selection, allow affinity maturation for a particular antigen. The protein is Immunoglobulin kappa variable 1-9 of Homo sapiens (Human).